Consider the following 339-residue polypeptide: Fructose-1,6-bisphosphatase isozyme 2 (339 aa).

The tract at residues 3–10 (DRSPFETD) is important for interaction with ALDOA. AMP contacts are provided by residues Val18 and 28–32 (TGELT). Residues Asp69 and Glu98 each contribute to the Mg(2+) site. 113–114 (KY) lines the AMP pocket. The Mg(2+) site is built by Asp119, Leu121, and Asp122. Residue Asp122 coordinates substrate. Arg141 provides a ligand contact to AMP. Residues 204–208 (KKKGK) carry the Nuclear localization signal motif. Substrate is bound at residue 213–216 (NEGY). A phosphotyrosine mark is found at Tyr216 and Tyr219. Residues 245–249 (YVGSM), Tyr265, and Lys275 contribute to the substrate site. Glu281 contributes to the Mg(2+) binding site.

This sequence belongs to the FBPase class 1 family. In terms of assembly, homotetramer. Interacts with ALDOA; the interaction blocks inhibition by physiological concentrations of AMP and reduces inhibition by Ca(2+). Interacts with alpha-actinin and F-actin. It depends on Mg(2+) as a cofactor.

The protein localises to the cell junction. Its subcellular location is the cytoplasm. It localises to the nucleus. The protein resides in the myofibril. It is found in the sarcomere. The protein localises to the z line. It carries out the reaction beta-D-fructose 1,6-bisphosphate + H2O = beta-D-fructose 6-phosphate + phosphate. It functions in the pathway carbohydrate biosynthesis; gluconeogenesis. Its activity is regulated as follows. Subject to complex allosteric regulation. The enzyme can assume an active R-state, or an inactive T-state. Intermediate conformations may exist. AMP acts as an allosteric inhibitor. Fructose 2,6-bisphosphate acts as a competitive inhibitor. Strongly inhibited by Ca(2+). Its function is as follows. Catalyzes the hydrolysis of fructose 1,6-bisphosphate to fructose 6-phosphate in the presence of divalent cations and probably participates in glycogen synthesis from carbohydrate precursors, such as lactate. In Rattus norvegicus (Rat), this protein is Fructose-1,6-bisphosphatase isozyme 2 (Fbp2).